The sequence spans 441 residues: Methionine aminopeptidase 2A (441 aa).

Residues 1–103 form a disordered region; that stretch reads MAIGNPEVAT…SGDFPQGEIQ (103 aa). Over residues 18 to 33 the composition is skewed to polar residues; that stretch reads AESSNGNESQLSSDLT. Over residues 37-62 the composition is skewed to basic and acidic residues; that stretch reads DLAEVKEDEKDNNQEEEDGLKAEAST. Residues 63-76 are compositionally biased toward basic residues; sequence KKKKKKSKSKKKKS. His-194 is a binding site for substrate. A divalent metal cation is bound by residues Asp-214, Asp-225, and His-294. Substrate is bound at residue His-302. Residues Glu-327 and Glu-422 each contribute to the a divalent metal cation site.

It belongs to the peptidase M24A family. Methionine aminopeptidase eukaryotic type 2 subfamily. Requires Co(2+) as cofactor. Zn(2+) is required as a cofactor. Mn(2+) serves as cofactor. The cofactor is Fe(2+). As to expression, ubiquitous. Preferentially expressed in roots.

Its subcellular location is the cytoplasm. The catalysed reaction is Release of N-terminal amino acids, preferentially methionine, from peptides and arylamides.. Its function is as follows. Cotranslationally removes the N-terminal methionine from nascent proteins. The N-terminal methionine is often cleaved when the second residue in the primary sequence is small and uncharged (Met-Ala-, Cys, Gly, Pro, Ser, Thr, or Val). The sequence is that of Methionine aminopeptidase 2A from Arabidopsis thaliana (Mouse-ear cress).